Here is a 738-residue protein sequence, read N- to C-terminus: NAD(P)H-quinone oxidoreductase subunit 5, chloroplastic (738 aa).

Transmembrane regions (helical) follow at residues 9–29, 39–59, 89–109, 125–145, 147–167, 185–205, 219–239, 258–278, 280–300, 327–347, 354–374, 396–416, 425–445, 542–562, 610–630, 691–711, and 717–737; these read WVIPLLPLPVIMSMGFGLFLI, IWAFPSILLLSIAMVFSLHLS, VDPLTSIMLILITTVGILVLI, FVYISFFNTSMLGLVTSSNLI, IYFFWELVGMCSYLLIGFWFT, GDFGLLLGILGFFWITGSLEF, NGINSLLTTLCAFLLFLGAVA, TPISALIHAATMVAAGIFLLA, LLPLFISLPWIMSFISLIGTI, LGYMMLALGIGSYQAALFHLI, ALLFLGSGSVIHSMEPLVGYS, TTFLCGTLSLCGIPPLACFWS, WLYSPFFGIIASFTAGLTAFY, LFPLLILLLFTLFIGSIGIHF, SLAIFGLFIAYIFYGSAYSFF, GVIDGITNGVGLAGFCIGEEI, and GRISSYLFFFLCYVSLFLFFI.

It belongs to the complex I subunit 5 family. As to quaternary structure, NDH is composed of at least 16 different subunits, 5 of which are encoded in the nucleus.

The protein localises to the plastid. The protein resides in the chloroplast thylakoid membrane. It catalyses the reaction a plastoquinone + NADH + (n+1) H(+)(in) = a plastoquinol + NAD(+) + n H(+)(out). The catalysed reaction is a plastoquinone + NADPH + (n+1) H(+)(in) = a plastoquinol + NADP(+) + n H(+)(out). In terms of biological role, NDH shuttles electrons from NAD(P)H:plastoquinone, via FMN and iron-sulfur (Fe-S) centers, to quinones in the photosynthetic chain and possibly in a chloroplast respiratory chain. The immediate electron acceptor for the enzyme in this species is believed to be plastoquinone. Couples the redox reaction to proton translocation, and thus conserves the redox energy in a proton gradient. The polypeptide is NAD(P)H-quinone oxidoreductase subunit 5, chloroplastic (ndhF) (Zea mays (Maize)).